The following is a 504-amino-acid chain: Maturase K (504 aa).

This sequence belongs to the intron maturase 2 family. MatK subfamily.

It localises to the plastid. Its subcellular location is the chloroplast. Usually encoded in the trnK tRNA gene intron. Probably assists in splicing its own and other chloroplast group II introns. This Simmondsia chinensis (Jojoba) protein is Maturase K.